Here is a 396-residue protein sequence, read N- to C-terminus: Elongation factor Tu 1 (396 aa).

The tr-type G domain maps to 10–206; that stretch reads KLHVNVGTIG…ALDTFIPDPT (197 aa). The tract at residues 19 to 26 is G1; sequence GHVDHGKT. A GTP-binding site is contributed by 19 to 26; the sequence is GHVDHGKT. Position 26 (T26) interacts with Mg(2+). The G2 stretch occupies residues 60–64; it reads GITIS. Positions 81–84 are G3; that stretch reads DCPG. GTP-binding positions include 81-85 and 136-139; these read DCPGH and NKAD. The interval 136 to 139 is G4; that stretch reads NKAD. The segment at 174-176 is G5; it reads SAR.

Belongs to the TRAFAC class translation factor GTPase superfamily. Classic translation factor GTPase family. EF-Tu/EF-1A subfamily. Monomer.

Its subcellular location is the cytoplasm. The enzyme catalyses GTP + H2O = GDP + phosphate + H(+). Its function is as follows. GTP hydrolase that promotes the GTP-dependent binding of aminoacyl-tRNA to the A-site of ribosomes during protein biosynthesis. The chain is Elongation factor Tu 1 from Xanthomonas campestris pv. campestris (strain B100).